The chain runs to 343 residues: N-acetyl-gamma-glutamyl-phosphate reductase (343 aa).

Residue cysteine 147 is part of the active site.

This sequence belongs to the NAGSA dehydrogenase family. Type 1 subfamily.

Its subcellular location is the cytoplasm. The enzyme catalyses N-acetyl-L-glutamate 5-semialdehyde + phosphate + NADP(+) = N-acetyl-L-glutamyl 5-phosphate + NADPH + H(+). It functions in the pathway amino-acid biosynthesis; L-arginine biosynthesis; N(2)-acetyl-L-ornithine from L-glutamate: step 3/4. Its function is as follows. Catalyzes the NADPH-dependent reduction of N-acetyl-5-glutamyl phosphate to yield N-acetyl-L-glutamate 5-semialdehyde. The polypeptide is N-acetyl-gamma-glutamyl-phosphate reductase (Listeria monocytogenes serovar 1/2a (strain ATCC BAA-679 / EGD-e)).